Consider the following 110-residue polypeptide: Phosphoribosyl-ATP pyrophosphatase (110 aa).

This sequence belongs to the PRA-PH family.

The protein localises to the cytoplasm. The enzyme catalyses 1-(5-phospho-beta-D-ribosyl)-ATP + H2O = 1-(5-phospho-beta-D-ribosyl)-5'-AMP + diphosphate + H(+). It participates in amino-acid biosynthesis; L-histidine biosynthesis; L-histidine from 5-phospho-alpha-D-ribose 1-diphosphate: step 2/9. The polypeptide is Phosphoribosyl-ATP pyrophosphatase (Stutzerimonas stutzeri (strain A1501) (Pseudomonas stutzeri)).